Consider the following 252-residue polypeptide: Ribosomal RNA small subunit methyltransferase J (252 aa).

S-adenosyl-L-methionine contacts are provided by residues 101–102, 117–118, 153–154, and aspartate 171; these read RD, ER, and SS.

Belongs to the methyltransferase superfamily. RsmJ family.

It is found in the cytoplasm. The catalysed reaction is guanosine(1516) in 16S rRNA + S-adenosyl-L-methionine = N(2)-methylguanosine(1516) in 16S rRNA + S-adenosyl-L-homocysteine + H(+). In terms of biological role, specifically methylates the guanosine in position 1516 of 16S rRNA. The protein is Ribosomal RNA small subunit methyltransferase J of Salmonella schwarzengrund (strain CVM19633).